The primary structure comprises 145 residues: Hemoglobin subunit beta-3 (145 aa).

The 145-residue stretch at 1-145 folds into the Globin domain; that stretch reads MLTAEEKAAV…VANALAHRYH (145 aa). The residue at position 11 (Thr-11) is a Phosphothreonine. Residue Lys-58 is modified to N6-acetyllysine. Heme b is bound at residue His-62. Residue Lys-81 is modified to N6-acetyllysine. Residue His-91 participates in heme b binding. Cys-92 carries the post-translational modification S-nitrosocysteine.

It belongs to the globin family. Heterotetramer of two alpha chains and two beta chains. As to expression, red blood cells.

Involved in oxygen transport from the lung to the various peripheral tissues. This Odocoileus virginianus virginianus (Virginia white-tailed deer) protein is Hemoglobin subunit beta-3 (HBB).